A 778-amino-acid chain; its full sequence is Endonuclease MutS2 (778 aa).

ATP is bound at residue 328-335 (GPNTGGKT). Residues 702 to 777 (LDLRGKRYEE…GSGATIVTFK (76 aa)) enclose the Smr domain.

It belongs to the DNA mismatch repair MutS family. MutS2 subfamily. As to quaternary structure, homodimer. Binds to stalled ribosomes, contacting rRNA.

In terms of biological role, endonuclease that is involved in the suppression of homologous recombination and thus may have a key role in the control of bacterial genetic diversity. Its function is as follows. Acts as a ribosome collision sensor, splitting the ribosome into its 2 subunits. Detects stalled/collided 70S ribosomes which it binds and splits by an ATP-hydrolysis driven conformational change. Acts upstream of the ribosome quality control system (RQC), a ribosome-associated complex that mediates the extraction of incompletely synthesized nascent chains from stalled ribosomes and their subsequent degradation. Probably generates substrates for RQC. In Streptococcus pneumoniae (strain Taiwan19F-14), this protein is Endonuclease MutS2.